Reading from the N-terminus, the 204-residue chain is Somatotropin (204 aa).

A signal peptide spans 1-17 (MDRAVLLLSVLSLGVSS). Position 18 is a pyrrolidone carboxylic acid (Gln-18). Residue His-35 coordinates Zn(2+). Residues Cys-69 and Cys-177 are joined by a disulfide bond. Glu-186 contributes to the Zn(2+) binding site. A disulfide bridge links Cys-194 with Cys-202.

It belongs to the somatotropin/prolactin family.

The protein localises to the secreted. Functionally, growth hormone plays an important role in growth control and is involved in the regulation of several anabolic processes. Implicated as an osmoregulatory substance important for seawater adaptation. This Morone saxatilis (Striped bass) protein is Somatotropin (gh).